We begin with the raw amino-acid sequence, 604 residues long: uncharacterized protein (604 aa).

One can recognise an ABC transmembrane type-1 domain in the interval 45–329 (LPLSFLTVLI…LGQVYNQLLM (285 aa)). Helical transmembrane passes span 49–69 (FLTV…IGVY), 82–102 (LLIQ…AANV), 162–182 (VINL…LFTL), 184–204 (PELT…STSL), 273–293 (LVEM…ATLI), and 297–317 (TITI…WEPI). The region spanning 363–597 (ISFEEVEFSY…GGIYAGLVKA (235 aa)) is the ABC transporter domain. ATP is bound at residue 396–403 (GHTGSGKT).

It belongs to the ABC transporter superfamily.

The protein resides in the cell membrane. This is an uncharacterized protein from Bacillus subtilis (strain 168).